The sequence spans 202 residues: Small ribosomal subunit protein uS4c (202 aa).

An S4 RNA-binding domain is found at 90–153 (MRLDNIIFRL…KSETIISKNI (64 aa)).

It belongs to the universal ribosomal protein uS4 family. As to quaternary structure, part of the 30S ribosomal subunit. Contacts protein S5. The interaction surface between S4 and S5 is involved in control of translational fidelity.

Its subcellular location is the plastid. It localises to the chloroplast. One of the primary rRNA binding proteins, it binds directly to 16S rRNA where it nucleates assembly of the body of the 30S subunit. Functionally, with S5 and S12 plays an important role in translational accuracy. The sequence is that of Small ribosomal subunit protein uS4c (rps4) from Catharomnion ciliatum (Moss).